A 1072-amino-acid polypeptide reads, in one-letter code: Guanylyl cyclase C (1072 aa).

The signal sequence occupies residues 1–22 (MTSLLGLAVRLLLFQPTLMFWA). Topologically, residues 23 to 429 (SQVRQKCHNG…PNDVPGLGPQ (407 aa)) are extracellular. N-linked (GlcNAc...) asparagine glycosylation is found at Asn-31, Asn-74, Asn-78, Asn-187, Asn-194, Asn-306, and Asn-401. The chain crosses the membrane as a helical span at residues 430-453 (ILMIAVFTLTGIVVVLLLIALLVL). The Cytoplasmic segment spans residues 454–1072 (RKYRRDHELR…NNSDHDSTYF (619 aa)). Residues 488–748 (LKIDDDRRRD…KIESTLAKIF (261 aa)) form the Protein kinase domain. In terms of domain architecture, Guanylate cyclase spans 823 to 953 (TIYFSDIVGF…DTVNTASRME (131 aa)).

Belongs to the adenylyl cyclase class-4/guanylyl cyclase family. In terms of assembly, homotrimer. Interacts via its C-terminal region with PDZK2. Interacts with the lectin chaperone VIP36. Glycosylation at Asn-74 and/or Asn-78 is required for interaction with VIP36 while glycosylation at Asn-401 modulates ligand-mediated GC-C activation.

The protein resides in the cell membrane. It localises to the endoplasmic reticulum membrane. It carries out the reaction GTP = 3',5'-cyclic GMP + diphosphate. Functionally, guanylyl cyclase that catalyzes synthesis of cyclic GMP (cGMP) from GTP. Receptor for the E.coli heat-stable enterotoxin; E.coli enterotoxin markedly stimulates the accumulation of cGMP in mammalian cells expressing GUCY2C. This is Guanylyl cyclase C (Gucy2c) from Rattus norvegicus (Rat).